The following is a 260-amino-acid chain: Histidinol-phosphatase (260 aa).

The Mg(2+) site is built by Glu-67, Asp-83, Ile-85, and Asp-86. Glu-67 is a substrate binding site. Substrate is bound by residues 85–88 (IDGT), Arg-185, and Asp-213. Position 213 (Asp-213) interacts with Mg(2+).

This sequence belongs to the inositol monophosphatase superfamily. Mg(2+) is required as a cofactor.

The enzyme catalyses L-histidinol phosphate + H2O = L-histidinol + phosphate. Its pathway is amino-acid biosynthesis; L-histidine biosynthesis; L-histidine from 5-phospho-alpha-D-ribose 1-diphosphate: step 8/9. Functionally, catalyzes the dephosphorylation of histidinol-phosphate to histidinol, the direct precursor of histidine. The chain is Histidinol-phosphatase (hisN) from Mycobacterium tuberculosis (strain ATCC 25618 / H37Rv).